The following is a 478-amino-acid chain: Cysteine--tRNA ligase (478 aa).

Position 29 (Cys29) interacts with Zn(2+). Residues 31–41 (PTVYDIPHIGN) carry the 'HIGH' region motif. 3 residues coordinate Zn(2+): Cys216, His241, and Glu245. Positions 274–278 (KMSKS) match the 'KMSKS' region motif. Residue Lys277 participates in ATP binding.

This sequence belongs to the class-I aminoacyl-tRNA synthetase family. As to quaternary structure, monomer. Zn(2+) is required as a cofactor.

Its subcellular location is the cytoplasm. It catalyses the reaction tRNA(Cys) + L-cysteine + ATP = L-cysteinyl-tRNA(Cys) + AMP + diphosphate. The polypeptide is Cysteine--tRNA ligase (Orientia tsutsugamushi (strain Ikeda) (Rickettsia tsutsugamushi)).